A 174-amino-acid chain; its full sequence is Adenine phosphoribosyltransferase (174 aa).

It belongs to the purine/pyrimidine phosphoribosyltransferase family. In terms of assembly, homodimer.

The protein localises to the cytoplasm. It catalyses the reaction AMP + diphosphate = 5-phospho-alpha-D-ribose 1-diphosphate + adenine. The protein operates within purine metabolism; AMP biosynthesis via salvage pathway; AMP from adenine: step 1/1. Functionally, catalyzes a salvage reaction resulting in the formation of AMP, that is energically less costly than de novo synthesis. This is Adenine phosphoribosyltransferase from Nitrosomonas eutropha (strain DSM 101675 / C91 / Nm57).